Consider the following 587-residue polypeptide: ASI1-immunoprecipitated protein 3 (587 aa).

The disordered stretch occupies residues 1 to 118; that stretch reads MVLSRRFAQV…NVTGKGKGKR (118 aa). Residues 66–98 show a composition bias toward acidic residues; the sequence is EDEDMAEGDDDQAEEETNPEAEEEEDEEEEEKP. The region spanning 129–248 is the BAH domain; the sequence is NTYDLEVPVL…TVEKKLWKLT (120 aa). The region spanning 344–493 is the TFIIS central domain; the sequence is HRDKCLGKLL…RMQMTSVRCS (150 aa). Disordered regions lie at residues 371 to 396 and 539 to 587; these read EAKVGSDASHLEQDEKDTKPENGKDE and TDKP…KKPE. The span at 560-570 shows a compositional bias: basic and acidic residues; that stretch reads ETNKPKDEALK. Residues 571-581 are compositionally biased toward polar residues; it reads TNDSNADNNPE.

Interacts with MOM1. Component of the ASI1-AIPP1-EDM2 (AAE) RNA regulatory complex composed of at least AIPP1/EDM3, ASI1 and EDM2 and may contain CPL2, AIPP2 and AIPP3/BDT1. Part of the BAH-PHD bivalent histone reader complex that contains AIPP2, PAIPP2 and AIPP3/BDT1; the BAH-PHD module associates with CPL2 to form the BAH-PHD-CPL2 complex (BPC) for transcriptional repression. Binds directly to CPL2, PHD1, PAIPP2/PHD2, AIPP2/PHD3, PHD4, PHD5 and PHD6. Expressed ubiquitously.

Its subcellular location is the nucleus. Functionally, transcriptional repressor. Together with PHD finger-containing proteins (e.g. PHD1, PAIPP2/PHD2, AIPP2/PHD3, PHD4, PHD5 and PHD6), cooperates to form a BAH-PHD bivalent histone reader complex able to read histone H3 lysine 27 trimethylation (H3K27me3) and low-methylated H3K4 histone marks in order to regulate transcription, especially to prevent early flowering; H3K27me3 reader of this complex. CPL2 is subsequently recruited to form a BAH-PHD-CPL2 complex (BPC) in order to silence several H3K27me3 and low-methylated H3K4 enriched loci, including AGO5, via the phosphorylation state-dependent inhibition of Pol II release from the transcriptional start site (e.g. Ser5P-Pol II dephosphorylation). The BPC complex represses flowering by inhibiting the expression of several genes, including AGL6, FT, FUL and SOC1. Prevents the accumulation of intronic heterochromatin-containing genes (e.g. IBM1, At3g05410 and RPP7). Seems to not be involved in vernalization establishment, by contrast to orthologs in grass plants. The protein is ASI1-immunoprecipitated protein 3 of Arabidopsis thaliana (Mouse-ear cress).